Consider the following 252-residue polypeptide: Insulin-induced gene 1 protein (252 aa).

Over 1 to 59 (MPRLESGAWSCSCAARARHAARPGEAAPKADAMQSPSPSAGRAEREASGGSATTWRQHL) the chain is Cytoplasmic. A disordered region spans residues 22 to 48 (RPGEAAPKADAMQSPSPSAGRAEREAS). The chain crosses the membrane as a helical span at residues 60-82 (VQRSVVLFVVGAFMALVLNLLQI). Residues 83–101 (QRNVTLFPDEVIATLFSSA) are Extracellular-facing. A helical transmembrane segment spans residues 102-119 (WWVPPCCGTAAAVVGLLY). Over 120-134 (PCIDSHLGEPHKFKR) the chain is Cytoplasmic. Residues 135–157 (EWASVMRCIAVFVGINHASAKLD) traverse the membrane as a helical segment. At 158–160 (FAN) the chain is on the extracellular side. A helical transmembrane segment spans residues 161–179 (NVQLSLTLAALSLGLWWTF). Topologically, residues 180 to 184 (DRSRS) are cytoplasmic. Residues 185–206 (GLGLGITIAFVATLITQFLVYN) form a helical membrane-spanning segment. Over 207 to 220 (GVYQYTSPDFLYIR) the chain is Extracellular. The helical transmembrane segment at 221 to 238 (SWLPCIFFSGGVTVGNIG) threads the bilayer. The Cytoplasmic segment spans residues 239–252 (RQLAMGIPEKPHND). Positions 246–252 (PEKPHND) match the KxHxx motif.

This sequence belongs to the INSIG family. In terms of assembly, interacts with SCAP; interaction is direct and only takes place in the presence of sterols; it prevents interaction between SCAP and the coat protein complex II (COPII). Associates with the SCAP-SREBP complex; association is mediated via its interaction with SCAP and only takes place in the presence of sterols.

It localises to the endoplasmic reticulum membrane. Oxysterol-binding protein that mediates feedback control of cholesterol synthesis by controlling both endoplasmic reticulum to Golgi transport of SCAP and degradation of HMGCR. Acts as a negative regulator of cholesterol biosynthesis by mediating the retention of the SCAP-SREBP complex in the endoplasmic reticulum, thereby blocking the processing of sterol regulatory element-binding proteins (SREBPs). Binds oxysterol, including 25-hydroxycholesterol, regulating interaction with SCAP and retention of the SCAP-SREBP complex in the endoplasmic reticulum. In presence of oxysterol, interacts with SCAP, retaining the SCAP-SREBP complex in the endoplasmic reticulum, thereby preventing SCAP from escorting SREBPs to the Golgi. Sterol deprivation reduces oxysterol-binding, disrupting the interaction between INSIG1 and SCAP, thereby promoting Golgi transport of the SCAP-SREBP complex, followed by processing and nuclear translocation of SREBPs. Also regulates cholesterol synthesis by regulating degradation of HMGCR. This Gallus gallus (Chicken) protein is Insulin-induced gene 1 protein.